The primary structure comprises 229 residues: Flagellar L-ring protein (229 aa).

Positions 1–25 (MKQVRLLPSAAVRAACALAAAALAG) are cleaved as a signal peptide. Cys26 carries the N-palmitoyl cysteine lipid modification. Cys26 carries S-diacylglycerol cysteine lipidation.

The protein belongs to the FlgH family. The basal body constitutes a major portion of the flagellar organelle and consists of four rings (L,P,S, and M) mounted on a central rod.

The protein resides in the cell outer membrane. It localises to the bacterial flagellum basal body. Its function is as follows. Assembles around the rod to form the L-ring and probably protects the motor/basal body from shearing forces during rotation. The protein is Flagellar L-ring protein of Burkholderia multivorans (strain ATCC 17616 / 249).